Reading from the N-terminus, the 362-residue chain is Type II methyltransferase M.MamI (362 aa).

The protein belongs to the N(4)/N(6)-methyltransferase family.

The catalysed reaction is a 2'-deoxyadenosine in DNA + S-adenosyl-L-methionine = an N(6)-methyl-2'-deoxyadenosine in DNA + S-adenosyl-L-homocysteine + H(+). Functionally, a gamma subtype methylase that recognizes the double-stranded sequence 5'-GATNNNNATC-3', methylates A-? on both strands, and protects the DNA from cleavage by the MamI endonuclease. This Microbacterium ammoniaphilum protein is Type II methyltransferase M.MamI.